The primary structure comprises 1103 residues: Kinesin-like protein KIF1C (1103 aa).

The Kinesin motor domain maps to 5–348 (SVKVAVRVRP…LRYADRTKQI (344 aa)). ATP is bound at residue 97–104 (GQTGAGKS). The residue at position 295 (serine 295) is a Phosphoserine. Coiled-coil stretches lie at residues 359-388 (NARL…SALE) and 438-479 (EEAM…LAEM). A disordered region spans residues 400–438 (ALPAVSSPPAPVSPSSPTTHNGELEPSFSPNTESQIGPE). Serine 494 bears the Phosphoserine mark. The FHA domain maps to 523 to 590 (TRVGQVDMDI…LKSGNRIVMG (68 aa)). Residues 633-674 (EQQGIDIKLEMEKRLQDLENQYRKEKEEADLLLEQQRLYADS) are a coiled coil. Phosphoserine is present on residues serine 674 and serine 676. 3 disordered regions span residues 808-828 (GEEE…ARGA), 874-924 (LAQD…WERV), and 950-1103 (QGLQ…GAAV). Gly residues predominate over residues 813 to 822 (GGAGSGGGSE). Residues 828–872 (AEVEDLRAHIDKLTGILQEVKLQNSSKDRELQALRDRMLRMERVI) adopt a coiled-coil conformation. A compositionally biased stretch (low complexity) spans 893 to 910 (PEGSEAAEEAAPSDRMPS). Serine 915 bears the Phosphoserine mark. Gly residues predominate over residues 953–962 (QGSGGRGGGL). A compositionally biased stretch (basic residues) spans 1021–1031 (PSPRRSHHPRR). Serine 1033 carries the phosphoserine modification. Omega-N-methylarginine is present on arginine 1041. Positions 1062–1083 (PQPPQPYPAQRPPGPRYPPYTT) are enriched in pro residues. Threonine 1083 bears the Phosphothreonine mark. At serine 1092 the chain carries Phosphoserine. Positions 1092–1103 (SAPDLKESGAAV) are enriched in basic and acidic residues.

It belongs to the TRAFAC class myosin-kinesin ATPase superfamily. Kinesin family. Unc-104 subfamily. As to quaternary structure, monomer. Interacts with BICD2. Phosphorylated on tyrosine residues. In terms of tissue distribution, expressed in all tissues examined, with most abundant expression in heart and skeletal muscle.

The protein localises to the cytoplasm. It is found in the cytoskeleton. Motor required for the retrograde transport of Golgi vesicles to the endoplasmic reticulum. Has a microtubule plus end-directed motility. The protein is Kinesin-like protein KIF1C (KIF1C) of Homo sapiens (Human).